A 342-amino-acid polypeptide reads, in one-letter code: tRNA N6-adenosine threonylcarbamoyltransferase (342 aa).

2 residues coordinate Fe cation: His115 and His119. Residues 138–142 (IISGG), Asp171, Gly184, Asp188, and Asn276 each bind substrate. Asp304 provides a ligand contact to Fe cation.

This sequence belongs to the KAE1 / TsaD family. Fe(2+) serves as cofactor.

The protein resides in the cytoplasm. The catalysed reaction is L-threonylcarbamoyladenylate + adenosine(37) in tRNA = N(6)-L-threonylcarbamoyladenosine(37) in tRNA + AMP + H(+). In terms of biological role, required for the formation of a threonylcarbamoyl group on adenosine at position 37 (t(6)A37) in tRNAs that read codons beginning with adenine. Is involved in the transfer of the threonylcarbamoyl moiety of threonylcarbamoyl-AMP (TC-AMP) to the N6 group of A37, together with TsaE and TsaB. TsaD likely plays a direct catalytic role in this reaction. The chain is tRNA N6-adenosine threonylcarbamoyltransferase from Endomicrobium trichonymphae.